The primary structure comprises 157 residues: Nascent polypeptide-associated complex subunit beta-1 (157 aa).

Disordered stretches follow at residues 19–42 (KVGG…KDDT) and 126–157 (EKHE…ADVE). One can recognise an NAC-A/B domain in the interval 38–103 (NKDDTKLQSQ…PQEKNLQDLF (66 aa)). Residues 126-142 (EKHEAKAPADAEKKDEA) show a composition bias toward basic and acidic residues. Phosphothreonine is present on Thr-151.

This sequence belongs to the NAC-beta family. In terms of assembly, part of the nascent polypeptide-associated complex (NAC), consisting of EGD2 and either EGD1 or BTT1. NAC associates with ribosomes via EGD1 or BTT1, and with the CCR4-NOT complex.

Its subcellular location is the cytoplasm. The protein localises to the nucleus. Functionally, component of the nascent polypeptide-associated complex (NAC), a dynamic component of the ribosomal exit tunnel, protecting the emerging polypeptides from interaction with other cytoplasmic proteins to ensure appropriate nascent protein targeting. The NAC complex also promotes mitochondrial protein import by enhancing productive ribosome interactions with the outer mitochondrial membrane and blocks the inappropriate interaction of ribosomes translating non-secretory nascent polypeptides with translocation sites in the membrane of the endoplasmic reticulum. EGD1 may act as a transcription factor that exert a negative effect on the expression of several genes that are transcribed by RNA polymerase II. This is Nascent polypeptide-associated complex subunit beta-1 (EGD1) from Saccharomyces cerevisiae (strain YJM789) (Baker's yeast).